Consider the following 59-residue polypeptide: Large ribosomal subunit protein bL32 (59 aa).

Positions 1 to 19 are enriched in basic residues; that stretch reads MPVPKRRMSRSNTRSRRAQ. Positions 1 to 20 are disordered; the sequence is MPVPKRRMSRSNTRSRRAQW.

It belongs to the bacterial ribosomal protein bL32 family.

This Acidothermus cellulolyticus (strain ATCC 43068 / DSM 8971 / 11B) protein is Large ribosomal subunit protein bL32.